The primary structure comprises 156 residues: Ribosomal RNA large subunit methyltransferase H (156 aa).

S-adenosyl-L-methionine contacts are provided by residues Leu73, Gly104, and 123–128 (LSPLTL).

Belongs to the RNA methyltransferase RlmH family. As to quaternary structure, homodimer.

The protein localises to the cytoplasm. The catalysed reaction is pseudouridine(1915) in 23S rRNA + S-adenosyl-L-methionine = N(3)-methylpseudouridine(1915) in 23S rRNA + S-adenosyl-L-homocysteine + H(+). In terms of biological role, specifically methylates the pseudouridine at position 1915 (m3Psi1915) in 23S rRNA. The chain is Ribosomal RNA large subunit methyltransferase H from Sodalis glossinidius (strain morsitans).